Consider the following 445-residue polypeptide: MDCDNGVVSEISDDKELLNLETVIPPPPNDSGHEFIGPSSGPPQVTITPSGVQSGSANGVSTSQQQQYSAEYLSQLLKDKKQLAAFPNVFHHLERLADEEINKVRVVLFQCEFSKESAPLPDAEGDSTVHTEKVFVPAKEHPDYNFVGRILGPRGMTAKQLEQETGCKIMVRGRGSMRDKKKEELNRGKPNWEHLSEELHVLIQCEDTENRAKVKLMRAVEEVRKLLVPAPEGEDDLKRKQLMELAIINGTYRSGTDQSALAAAQLAAVKHQQQPFAAALQAAALQRGVLPMMANGLSRSPTMAVCGAPIVMSPSGRASSAGATATSQAALIMQQQSQLHAANAGNAALQQQAALLQQQQAAEYQQLLLSQAGLYDFSAMQQQYAAVGQNAAVAAAQAQAQAQYGALAAAAAANSAGNQQYADYAGVDLTSQQSAHGGYYVRRWA.

The tract at residues 22-63 is disordered; it reads TVIPPPPNDSGHEFIGPSSGPPQVTITPSGVQSGSANGVSTS. Positions 42–63 are enriched in polar residues; it reads PPQVTITPSGVQSGSANGVSTS. Positions 71–128 are qua1 domain; that stretch reads EYLSQLLKDKKQLAAFPNVFHHLERLADEEINKVRVVLFQCEFSKESAPLPDAEGDST. Residues 145-171 form the KH domain; it reads NFVGRILGPRGMTAKQLEQETGCKIMV. The interval 230–253 is qua2 domain; involved in RNA binding; the sequence is APEGEDDLKRKQLMELAIINGTYR.

As to quaternary structure, interacts with sup-12; in the presence of RNA, but with weak affinity in the absence of RNA. In terms of tissue distribution, isoform b: Expressed in the hypodermis and pharyngeal muscles. Isoform c: Expressed in body wall muscles and phayngeal muscles.

The protein localises to the nucleus. RNA-binding protein that binds to the 5'-NACUAAY-N(1,20)-UAAY-3' consensus sequence in pre-mRNA introns to promote alternative splicing. Required for mutually exclusive alternative splicing where it modulates the switch between mutually exclusive exons during pre-mRNA maturation. Involved in muscle-specific gene expression regulating the alternative splicing of genes such as let-2 and unc-60 to ensure that their respective isoforms are expressed in muscle. Promotes the removal of intron 10 from let-2 pre-mRNA to allow for the exclusive expression of the muscle-specific let-2 isoform (as opposed to the non-muscle-specific isoform expressed in embryos) in body wall muscles during late larval and adult stages of development. Binds cooperatively with RNA-binding protein sup-12 to intron 1A of the unc-60 pre-mRNA to promote alternative splicing and expression of the muscle specific isoform of unc-60. The chain is RNA-binding protein asd-2 from Caenorhabditis elegans.